The sequence spans 188 residues: dCTP deaminase (188 aa).

107–112 (KSTYAR) serves as a coordination point for dCTP. Residue Glu133 is the Proton donor/acceptor of the active site. The dCTP site is built by Gln152, Tyr166, and Gln176.

Belongs to the dCTP deaminase family. As to quaternary structure, homotrimer.

The enzyme catalyses dCTP + H2O + H(+) = dUTP + NH4(+). It functions in the pathway pyrimidine metabolism; dUMP biosynthesis; dUMP from dCTP (dUTP route): step 1/2. Its function is as follows. Catalyzes the deamination of dCTP to dUTP. This chain is dCTP deaminase, found in Sulfurovum sp. (strain NBC37-1).